Consider the following 599-residue polypeptide: Glutamine--fructose-6-phosphate aminotransferase [isomerizing] (599 aa).

C2 (nucleophile; for GATase activity) is an active-site residue. Residues 2–223 (CGIIGYIGNE…DRDIVILRKE (222 aa)) enclose the Glutamine amidotransferase type-2 domain. 2 consecutive SIS domains span residues 286 to 423 (LGKE…IIGK) and 452 to 589 (IAEE…VDKP). The For Fru-6P isomerization activity role is filled by K594.

In terms of assembly, homodimer.

It localises to the cytoplasm. It carries out the reaction D-fructose 6-phosphate + L-glutamine = D-glucosamine 6-phosphate + L-glutamate. Catalyzes the first step in hexosamine metabolism, converting fructose-6P into glucosamine-6P using glutamine as a nitrogen source. The sequence is that of Glutamine--fructose-6-phosphate aminotransferase [isomerizing] (glmS) from Methanococcus maripaludis (strain DSM 14266 / JCM 13030 / NBRC 101832 / S2 / LL).